The primary structure comprises 442 residues: 3-oxoacyl-[acyl-carrier-protein] synthase homolog (442 aa).

Residues 2–438 (SRRVVITGLG…GVNTSLLFKK (437 aa)) enclose the Ketosynthase family 3 (KS3) domain. Residues cysteine 187, histidine 322, and histidine 362 each act as for beta-ketoacyl synthase activity in the active site.

The protein belongs to the thiolase-like superfamily. Beta-ketoacyl-ACP synthases family.

It localises to the mitochondrion. It catalyses the reaction a fatty acyl-[ACP] + malonyl-[ACP] + H(+) = a 3-oxoacyl-[ACP] + holo-[ACP] + CO2. Functionally, possibly involved in the synthesis of a specialized molecule, probably related to a fatty acid, which is essential for mitochondrial respiration. Is essential for oxygen uptake and the presence of cytochromes A and B. The protein is 3-oxoacyl-[acyl-carrier-protein] synthase homolog (CEM1) of Saccharomyces cerevisiae (strain ATCC 204508 / S288c) (Baker's yeast).